The primary structure comprises 152 residues: Xanthine-guanine phosphoribosyltransferase (152 aa).

5-phospho-alpha-D-ribose 1-diphosphate contacts are provided by residues 37-38 (RG), Arg-69, and 88-96 (DDLVDTGGT). GMP is bound at residue Arg-69. Residue Asp-89 participates in Mg(2+) binding. Guanine is bound by residues Asp-92 and Ile-135. Xanthine is bound by residues Asp-92 and Ile-135. Residues 92–96 (DTGGT) and 134–135 (WI) each bind GMP.

Belongs to the purine/pyrimidine phosphoribosyltransferase family. XGPT subfamily. As to quaternary structure, homotetramer. It depends on Mg(2+) as a cofactor.

Its subcellular location is the cell inner membrane. It catalyses the reaction GMP + diphosphate = guanine + 5-phospho-alpha-D-ribose 1-diphosphate. The catalysed reaction is XMP + diphosphate = xanthine + 5-phospho-alpha-D-ribose 1-diphosphate. The enzyme catalyses IMP + diphosphate = hypoxanthine + 5-phospho-alpha-D-ribose 1-diphosphate. The protein operates within purine metabolism; GMP biosynthesis via salvage pathway; GMP from guanine: step 1/1. It functions in the pathway purine metabolism; XMP biosynthesis via salvage pathway; XMP from xanthine: step 1/1. Its function is as follows. Purine salvage pathway enzyme that catalyzes the transfer of the ribosyl-5-phosphate group from 5-phospho-alpha-D-ribose 1-diphosphate (PRPP) to the N9 position of the 6-oxopurines guanine and xanthine to form the corresponding ribonucleotides GMP (guanosine 5'-monophosphate) and XMP (xanthosine 5'-monophosphate), with the release of PPi. To a lesser extent, also acts on hypoxanthine. The chain is Xanthine-guanine phosphoribosyltransferase from Erwinia tasmaniensis (strain DSM 17950 / CFBP 7177 / CIP 109463 / NCPPB 4357 / Et1/99).